A 282-amino-acid chain; its full sequence is Bifunctional protein FolD (282 aa).

NADP(+) contacts are provided by residues 164 to 166 (GAS), Ile-189, and Ile-230.

It belongs to the tetrahydrofolate dehydrogenase/cyclohydrolase family. As to quaternary structure, homodimer.

The catalysed reaction is (6R)-5,10-methylene-5,6,7,8-tetrahydrofolate + NADP(+) = (6R)-5,10-methenyltetrahydrofolate + NADPH. It catalyses the reaction (6R)-5,10-methenyltetrahydrofolate + H2O = (6R)-10-formyltetrahydrofolate + H(+). It participates in one-carbon metabolism; tetrahydrofolate interconversion. Catalyzes the oxidation of 5,10-methylenetetrahydrofolate to 5,10-methenyltetrahydrofolate and then the hydrolysis of 5,10-methenyltetrahydrofolate to 10-formyltetrahydrofolate. This chain is Bifunctional protein FolD, found in Campylobacter jejuni subsp. doylei (strain ATCC BAA-1458 / RM4099 / 269.97).